Consider the following 204-residue polypeptide: uncharacterized protein (204 aa).

An N-terminal signal peptide occupies residues Met-1–Ala-16.

It is found in the secreted. This is an uncharacterized protein from Arthroderma benhamiae (strain ATCC MYA-4681 / CBS 112371) (Trichophyton mentagrophytes).